Here is a 183-residue protein sequence, read N- to C-terminus: Nucleoplasmin-like protein NO29 (183 aa).

The segment covering 126-166 (SDDEDLSGSEEEMEDEEEEEDDDDDDDDDDDDDDDDDEEEI) has biased composition (acidic residues). Positions 126–183 (SDDEDLSGSEEEMEDEEEEEDDDDDDDDDDDDDDDDDEEEITPIKPAKKPLKTLSRTF) are disordered.

It belongs to the nucleoplasmin family.

The protein resides in the nucleus. Its subcellular location is the nucleolus. This chain is Nucleoplasmin-like protein NO29, found in Xenopus laevis (African clawed frog).